A 445-amino-acid polypeptide reads, in one-letter code: MSRLLACLKQLQARSLIHNTTLLQPSCNVNSVYLGADPTAASLHVGNLVALMPLVHFFLNGFPVFTVIGDATAQLGDPSGRSTSRKQMAETTRTANSNSIHNQLKDLSSSILSYAQDCNYPFSQMPSSSQWSIVRNSSWYENLKLLKFLSSVGPHVRVSQMLARDSVTTRLQSPSGLSFAELTYQLLQAYDYSYLYENHSVNLQIGGSDQWGNITAGTDLVRRTHPNANVYALTTPLLTSSSGQKLGKSAGNAIWLDPKLTDSYSLYQYFISAPDDLACKCLDMLTLLPLEQLEQIKAEHEKDPSQRIVHKYLASNVVRMVHGKKALELAQIQTKLLHGAHQAPFGFYSEAPQQGDSFPSLPEIRALFKDCKFYRTIDSSIKDQPFSRLLRTLQIYTSRKEATEHILSGAVSLGHKPILDSNYKFPDNSLFVLRAGKRTFVLDSL.

Tyrosine 33 is an L-tyrosine binding site. Aspartate 37 contributes to the ATP binding site. Residues 38–47 carry the 'HIGH' region motif; it reads PTAASLHVGN. L-tyrosine-binding residues include aspartate 77, tyrosine 184, glutamine 188, aspartate 191, and glutamine 210. Residues 245–249 carry the 'KMSKS' region motif; it reads KLGKS. An ATP-binding site is contributed by lysine 248. An S4 RNA-binding domain is found at 384–445; the sequence is QPFSRLLRTL…GKRTFVLDSL (62 aa).

Belongs to the class-I aminoacyl-tRNA synthetase family. As to quaternary structure, homodimer.

It localises to the mitochondrion matrix. It catalyses the reaction tRNA(Tyr) + L-tyrosine + ATP = L-tyrosyl-tRNA(Tyr) + AMP + diphosphate + H(+). In terms of biological role, catalyzes the attachment of tyrosine to tRNA(Tyr) in a two-step reaction: tyrosine is first activated by ATP to form Tyr-AMP and then transferred to the acceptor end of tRNA(Tyr). The polypeptide is Tyrosine--tRNA ligase, mitochondrial (Schizosaccharomyces pombe (strain 972 / ATCC 24843) (Fission yeast)).